Reading from the N-terminus, the 235-residue chain is Purine nucleoside phosphorylase DeoD-type (235 aa).

His-4 provides a ligand contact to a purine D-ribonucleoside. Phosphate-binding positions include Gly-20, Arg-24, Arg-43, and 87–90; that span reads RVGT. Residues Glu-162, 179–181, and 203–204 contribute to the a purine D-ribonucleoside site; these read EME and SD. Catalysis depends on Asp-204, which acts as the Proton donor.

Belongs to the PNP/UDP phosphorylase family. As to quaternary structure, homohexamer; trimer of homodimers.

The catalysed reaction is a purine D-ribonucleoside + phosphate = a purine nucleobase + alpha-D-ribose 1-phosphate. It catalyses the reaction a purine 2'-deoxy-D-ribonucleoside + phosphate = a purine nucleobase + 2-deoxy-alpha-D-ribose 1-phosphate. Functionally, catalyzes the reversible phosphorolytic breakdown of the N-glycosidic bond in the beta-(deoxy)ribonucleoside molecules, with the formation of the corresponding free purine bases and pentose-1-phosphate. This is Purine nucleoside phosphorylase DeoD-type from Bacillus cereus (strain B4264).